Consider the following 662-residue polypeptide: DNA ligase (662 aa).

NAD(+) contacts are provided by residues 31-35 (DKDYD) and 79-80 (SL). Lys-121 (N6-AMP-lysine intermediate) is an active-site residue. NAD(+) contacts are provided by Arg-143, Glu-177, and Lys-313. Cys-406, Cys-409, Cys-422, and Cys-428 together coordinate Zn(2+). Positions 586–662 (VLESPFMGKT…LSEEEFENMI (77 aa)) constitute a BRCT domain.

This sequence belongs to the NAD-dependent DNA ligase family. LigA subfamily. Mg(2+) serves as cofactor. Requires Mn(2+) as cofactor.

The enzyme catalyses NAD(+) + (deoxyribonucleotide)n-3'-hydroxyl + 5'-phospho-(deoxyribonucleotide)m = (deoxyribonucleotide)n+m + AMP + beta-nicotinamide D-nucleotide.. In terms of biological role, DNA ligase that catalyzes the formation of phosphodiester linkages between 5'-phosphoryl and 3'-hydroxyl groups in double-stranded DNA using NAD as a coenzyme and as the energy source for the reaction. It is essential for DNA replication and repair of damaged DNA. This chain is DNA ligase, found in Clostridium perfringens (strain 13 / Type A).